A 120-amino-acid chain; its full sequence is Small ribosomal subunit protein bS6 (120 aa).

Positions 93-120 (KKADTAPSSMMKTVEREEARKASQTEQA) are disordered. Basic and acidic residues predominate over residues 105–120 (TVEREEARKASQTEQA).

This sequence belongs to the bacterial ribosomal protein bS6 family.

Its function is as follows. Binds together with bS18 to 16S ribosomal RNA. In Delftia acidovorans (strain DSM 14801 / SPH-1), this protein is Small ribosomal subunit protein bS6.